Here is a 270-residue protein sequence, read N- to C-terminus: Putative phosphoenolpyruvate synthase regulatory protein (270 aa).

Residue 150 to 157 coordinates ADP; it reads GVSRCGKT.

The protein belongs to the pyruvate, phosphate/water dikinase regulatory protein family. PSRP subfamily.

It catalyses the reaction [pyruvate, water dikinase] + ADP = [pyruvate, water dikinase]-phosphate + AMP + H(+). It carries out the reaction [pyruvate, water dikinase]-phosphate + phosphate + H(+) = [pyruvate, water dikinase] + diphosphate. Its function is as follows. Bifunctional serine/threonine kinase and phosphorylase involved in the regulation of the phosphoenolpyruvate synthase (PEPS) by catalyzing its phosphorylation/dephosphorylation. The sequence is that of Putative phosphoenolpyruvate synthase regulatory protein from Shewanella oneidensis (strain ATCC 700550 / JCM 31522 / CIP 106686 / LMG 19005 / NCIMB 14063 / MR-1).